The primary structure comprises 259 residues: HTH-type transcriptional regulator TtgV (259 aa).

An HTH iclR-type domain is found at 14–76 (IQVIARAASI…GPAGGFRLGP (63 aa)). Residues 36-59 (LAAIAQLVGLPRSTVQRIINALEE) constitute a DNA-binding region (H-T-H motif). The region spanning 89–253 (ILSLVKPYLR…KLNIERAIGR (165 aa)) is the IclR-ED domain.

In terms of biological role, represses the expression of the ttgGHI and ttgVW operons. Binds to the ttgGHI / ttgVW intergenic region, probably preventing binding of RNA polymerase; ttgV dissociates from this region in the presence of 1-hexanol. The protein is HTH-type transcriptional regulator TtgV (ttgV) of Pseudomonas putida (strain DOT-T1E).